The following is an 846-amino-acid chain: DNA mismatch repair protein MutS (846 aa).

610-617 (GPNMGGKS) contacts ATP.

The protein belongs to the DNA mismatch repair MutS family.

In terms of biological role, this protein is involved in the repair of mismatches in DNA. It is possible that it carries out the mismatch recognition step. This protein has a weak ATPase activity. The polypeptide is DNA mismatch repair protein MutS (Legionella pneumophila (strain Lens)).